A 237-amino-acid polypeptide reads, in one-letter code: Phosphoribosylaminoimidazole-succinocarboxamide synthase (237 aa).

The protein belongs to the SAICAR synthetase family.

It carries out the reaction 5-amino-1-(5-phospho-D-ribosyl)imidazole-4-carboxylate + L-aspartate + ATP = (2S)-2-[5-amino-1-(5-phospho-beta-D-ribosyl)imidazole-4-carboxamido]succinate + ADP + phosphate + 2 H(+). Its pathway is purine metabolism; IMP biosynthesis via de novo pathway; 5-amino-1-(5-phospho-D-ribosyl)imidazole-4-carboxamide from 5-amino-1-(5-phospho-D-ribosyl)imidazole-4-carboxylate: step 1/2. In Psychrobacter arcticus (strain DSM 17307 / VKM B-2377 / 273-4), this protein is Phosphoribosylaminoimidazole-succinocarboxamide synthase.